Consider the following 135-residue polypeptide: Integration host factor subunit beta (135 aa).

The segment covering 83 to 92 (GKELRERVDR) has biased composition (basic and acidic residues). Residues 83–135 (GKELRERVDRTVTQGGGMNGNGHAPHGKTGQSQLGSQSPASLHDDGQLNLVRS) are disordered. The segment covering 111–122 (TGQSQLGSQSPA) has biased composition (polar residues).

This sequence belongs to the bacterial histone-like protein family. In terms of assembly, heterodimer of an alpha and a beta chain.

This protein is one of the two subunits of integration host factor, a specific DNA-binding protein that functions in genetic recombination as well as in transcriptional and translational control. This chain is Integration host factor subunit beta, found in Cupriavidus metallidurans (strain ATCC 43123 / DSM 2839 / NBRC 102507 / CH34) (Ralstonia metallidurans).